The following is an 847-amino-acid chain: Alpha-glucuronidase (847 aa).

Positions 1-19 are cleaved as a signal peptide; it reads MVIRSLLLLLLAAIVPVFA. N-linked (GlcNAc...) asparagine glycans are attached at residues Asn52, Asn238, Asn321, Asn353, Asn586, Asn692, Asn740, and Asn767.

Belongs to the glycosyl hydrolase 67 family.

The protein resides in the secreted. The catalysed reaction is an alpha-D-glucuronoside + H2O = D-glucuronate + an alcohol. Its function is as follows. Releases 4-O-methylglucuronic acid from xylan. The polypeptide is Alpha-glucuronidase (Hypocrea jecorina (Trichoderma reesei)).